A 1173-amino-acid polypeptide reads, in one-letter code: MVASLLPSRFRGRESMNQQHPLRSGNRALTSTLQFLSKTACLHPIHTVCTIAILASTTYVGLLKDSFFHGPANVDKAEWGSLVEGSRSLITGPQNGWKWQSFDGDADVLGDFNHQALMTLVFPGSYGVASQAASPFLAPLPVNLSVIDLPSTSSPLTAYSKDKVFAFSVEYSSAPELVAAVQEIPNNSADLKLQETQLIEMERQMWIMKAARAHTKRSLAQWVHDTWTESLDLIKSAQTLDVVVMVLGYISMHLTFVSLFLSMKKLGSKVWLATSVLLSSTFAFLLGLDVAIRLGVPMSMRLLSEGLPFLVVIVGFEKSITLTRAVLSYAVQHRKPQKIQSDQGSVTAIAESTINYAVRSAIREKGYNIVCHYVVEILLLVIGAVLGIQGGLQHFCVLAALILFFDCLLLFTFYTAILSIKLEVNRLKRHINMRYALEDEGLSQRTAESVATSNDAQDSARTYLFGNDMKGSSVPKFKFWMVVGFLIVNLVNIGSTLFQASSSGSLSSISSWTESLSGSAIKPPLEPFKVAGSGLDELLFQARGRGQSTMVTVLAPIKYELEYPSIHRGTSQLHEYGVGGKMVGSLLTSLEDPVLSKWVFVALALSVALNSYLFKAARLGIKDPNLPSHPVDPVELDQAESFNAAQNQTPQIQSSLQAPQTRVFTPTTTDSDSDASLVLIKASLKVTKRAEGKTATSELPVSRTQIELDNLLKQNTISELNDEDVVALSLRGKVPGYALEKSLKDCTRAVKVRRSIISRTPATAELTSMLEHSKLPYENYAWERVLGACCENVIGYMPVPVGVAGPIVIDGKSYFIPMATTEGVLVASASRGSKAINLGGGAVTVLTGDGMTRGPCVKFDVLERAGAAKIWLDSDVGQTVMKEAFNSTSRFARLQSMRTTIAGTHLYIRFKTTTGDAMGMNMISKGVEHALNVMATEAGFSDMNIITLSGNYCTDKKPSALNWIDGRGKGIVAEAIIPANVVRDVLKSDVDSMVQLNISKNLIGSAMAGSVGGFNAQAANLAAAIFIATGQDPAQVVESANCITLMNNLRGSLQISVSMPSIEVGTLGGGTILEPQGAMLDMLGVRGSHPTTPGENARQLARIIGSAVLAGELSLCAALAAGHLVKAHMAHNRSAPASSAPSRSVSPSGGTRTVPVPNNALRPSAAATDRARR.

N-linked (GlcNAc...) asparagine glycans are attached at residues Asn143 and Asn186. Positions 241–420 (DVVVMVLGYI…FTFYTAILSI (180 aa)) constitute an SSD domain. Transmembrane regions (helical) follow at residues 242-262 (VVVM…LFLS), 272-292 (LATS…DVAI), 302-322 (LLSE…SITL), 368-388 (NIVC…VLGI), 397-417 (VLAA…YTAI), 479-499 (FWMV…TLFQ), and 594-614 (VLSK…SYLF). The interval 498 to 673 (FQASSSGSLS…FTPTTTDSDS (176 aa)) is linker. Residues 647-666 (NQTPQIQSSLQAPQTRVFTP) are compositionally biased toward polar residues. Residues 647-669 (NQTPQIQSSLQAPQTRVFTPTTT) form a disordered region. The tract at residues 674 to 1133 (DASLVLIKAS…LVKAHMAHNR (460 aa)) is catalytic. Catalysis depends on Glu822, which acts as the Charge relay system. The N-linked (GlcNAc...) asparagine glycan is linked to Asn886. Lys956 functions as the Charge relay system in the catalytic mechanism. N-linked (GlcNAc...) asparagine glycosylation occurs at Asn997. The active-site Charge relay system is Asp1032. His1128 functions as the Proton donor in the catalytic mechanism. Asn1132 is a glycosylation site (N-linked (GlcNAc...) asparagine). The segment at 1132-1173 (NRSAPASSAPSRSVSPSGGTRTVPVPNNALRPSAAATDRARR) is disordered. Positions 1133–1148 (RSAPASSAPSRSVSPS) are enriched in low complexity.

Belongs to the HMG-CoA reductase family.

It localises to the endoplasmic reticulum membrane. The catalysed reaction is (R)-mevalonate + 2 NADP(+) + CoA = (3S)-3-hydroxy-3-methylglutaryl-CoA + 2 NADPH + 2 H(+). The protein operates within polyketide biosynthesis. In terms of biological role, HMG-CoA reductase; part of the gene cluster that mediates the biosynthesis of compactin, also known as mevastatin or ML-236B, and which acts as a potent competitive inhibitor of HMG-CoA reductase. Compactin biosynthesis is performed in two stages. The first stage is catalyzed by the nonaketide synthase mlcA, which belongs to type I polyketide synthases and catalyzes the iterative nine-step formation of the polyketide. This PKS stage is completed by the action of dehydrogenase mlcG, which catalyzes the NADPH-dependent reduction of the unsaturated tetra-, penta- and heptaketide intermediates that arise during the mlcA-mediated biosynthesis of the nonaketide chain and leads to dihydro-ML-236C carboxylate. Covalently bound dihydro-ML-236C carboxylate is released from mlcA by the mlcF esterase. Conversion of dihydro-ML-236C carboxylate into ML-236A carboxylate is subsequently performed with the participation of molecular oxygen and P450 monoogygenase mlcC. Finally, mlcH performs the conversion of ML-236A carboxylate to ML-236B/compactin carboxylate through the addition of the side-chain diketide moiety produced by the diketide synthase mlcB. HMG-CoA reductase mlcD may act as a down-regulator of compactin production and is involved in conferring resistance to ML-236B/compactin. In Penicillium citrinum, this protein is 3-hydroxy-3-methylglutaryl coenzyme A reductase mlcD.